We begin with the raw amino-acid sequence, 291 residues long: MAVQVVQAVQAVHLESDAFLVCLNHALSTEKEEVMGLCIGELNDDIRSDSKFTYTGTEMRTVQEKMDTIRIVHIHSVIILRRSDKRKDRVEISPEQLSAASTEAERLAELTGRPMRVVGWYHSHPHITVWPSHVDVRTQAMYQMMDQGFVGLIFSCFIEDKNTKTGRVLYTCFQSIQAQKSSEYERIEIPIHIVPHITIGKVCLESAVELPKILCQEEQDAYRRIHSLTHLDSVTKIHNGSVFTKNLCSQMSAVSGPLLQWLEDRLEQNQQHLQELQQEKEELMEELSSLE.

The residue at position 2 (alanine 2) is an N-acetylalanine. One can recognise an MPN domain in the interval 12-179; sequence VHLESDAFLV…YTCFQSIQAQ (168 aa). The Zn(2+) site is built by histidine 122, histidine 124, and aspartate 135. Positions 122 to 135 match the JAMM motif motif; that stretch reads HSHPHITVWPSHVD. Serine 233 is subject to Phosphoserine.

Belongs to the peptidase M67A family. BRCC36 subfamily. Component of the ARISC complex, at least composed of UIMC1/RAP80, ABRAXAS1, BRCC3/BRCC36, BABAM2 and BABAM1/NBA1. Component of the BRCA1-A complex, at least composed of BRCA1, BARD1, UIMC1/RAP80, ABRAXAS1, BRCC3/BRCC36, BABAM2 and BABAM1/NBA1. In the BRCA1-A complex, interacts directly with ABRAXAS1 and BABAM2. Component of the BRISC complex, at least composed of ABRAXAS2, BRCC3/BRCC36, BABAM2 and BABAM1/NBA1. Identified in a complex with SHMT2 and the other subunits of the BRISC complex. In the BRISC complex, interacts directly with ABRAXAS2. Identified in a complex with ABRAXAS2 and NUMA1. The BRISC complex interacts with the CSN complex. Component of the BRCA1/BRCA2 containing complex (BRCC), which also contains BRCA1, BRCA2, BARD1, BABAM2 and RAD51. BRCC is a ubiquitin E3 ligase complex that enhances cellular survival following DNA damage. Interacts with BRCA1. Binds polyubiquitin. Interacts with PWWP2B. Interacts with HDAC1; this interaction is enhanced in the presence of PWWP2B. The cofactor is Zn(2+).

The protein resides in the nucleus. It localises to the cytoplasm. Its subcellular location is the cytoskeleton. The protein localises to the spindle pole. Metalloprotease that specifically cleaves 'Lys-63'-linked polyubiquitin chains. Does not have activity toward 'Lys-48'-linked polyubiquitin chains. Component of the BRCA1-A complex, a complex that specifically recognizes 'Lys-63'-linked ubiquitinated histones H2A and H2AX at DNA lesions sites, leading to target the BRCA1-BARD1 heterodimer to sites of DNA damage at double-strand breaks (DSBs). In the BRCA1-A complex, it specifically removes 'Lys-63'-linked ubiquitin on histones H2A and H2AX, antagonizing the RNF8-dependent ubiquitination at double-strand breaks (DSBs). Catalytic subunit of the BRISC complex, a multiprotein complex that specifically cleaves 'Lys-63'-linked ubiquitin in various substrates. Mediates the specific 'Lys-63'-specific deubiquitination associated with the COP9 signalosome complex (CSN), via the interaction of the BRISC complex with the CSN complex. The BRISC complex is required for normal mitotic spindle assembly and microtubule attachment to kinetochores via its role in deubiquitinating NUMA1. Plays a role in interferon signaling via its role in the deubiquitination of the interferon receptor IFNAR1; deubiquitination increases IFNAR1 activity by enhancing its stability and cell surface expression. Acts as a regulator of the NLRP3 inflammasome by mediating deubiquitination of NLRP3, leading to NLRP3 inflammasome assembly. Down-regulates the response to bacterial lipopolysaccharide (LPS) via its role in IFNAR1 deubiquitination. Deubiquitinates HDAC1 and PWWP2B leading to their stabilization. The protein is Lys-63-specific deubiquitinase BRCC36 (Brcc3) of Mus musculus (Mouse).